The sequence spans 252 residues: Small ribosomal subunit protein uS3 (252 aa).

The region spanning 16–85 is the KH type-2 domain; the sequence is IDEYLETKLE…NPQVEVKEVD (70 aa). The disordered stretch occupies residues 233–252; the sequence is EESEIEEITEEIEDVETLEE.

This sequence belongs to the universal ribosomal protein uS3 family. In terms of assembly, part of the 30S ribosomal subunit.

Binds the lower part of the 30S subunit head. This is Small ribosomal subunit protein uS3 from Methanosphaera stadtmanae (strain ATCC 43021 / DSM 3091 / JCM 11832 / MCB-3).